An 881-amino-acid polypeptide reads, in one-letter code: MSQPADINQSESSAETITQGRRADRPEETPSSSVYEQNLRFGDFLMPTVGDADATDSLSQSTNDRDIYSPREIDQYTRKVSSRTDPSTSTISNARQHPRNSVSRLSRSSSNVRQQRDIPKQNFKVRPLSPLRGQSPASLRSEESFTLKERQNAINKTRAFGMRLWKPALYKKFRSINRDADIDIHDEPLKRPNTSISNVIWLICFGAPLFLVIFICYIFFTVLSFFNVPDAIVYSKLCRGLMFYLLYPFGQHVRHKVKRLSVRSPAHPIYQTQHSHYDETPTSHHPDPARLNFLSFSFCVNPMNQSLDCNTTPHRRNASSIIYTLMYYLIIAPTLLITSAICMFTIFFVPCARTLWAICRHLRTCPLSLSFRPNLALPLSMDSSDVVLLCVKKAASWKYYKYTIDGIYIIYFDMLALIIPTIFFGFFGSQGHWFTSSVFLFTASLVSIIPLAYFIGMAVASISAQSSMGMGAFINAFFGSVIEVFLYSVALRKGNAGLVEGSVIGSILAGLLLMPGLSMCAGAIRKKFQFFNIKSAGATSTMLLFAVLGAFAPTMLFRIYGPFRLDCEPCGANCQKCTKHYVLENDSLYKNRVLPFTYCCSIMLVLAYAIGLWFTLRTHASHIWQNFTADDISFLKAEEEVGEPVNQDTAGNMSDSSEGGEAVVNGNSQHHHNRDDASSGLSSNGSENESLEHEPTNELPQRPLVNQSQNSHGDDAPNWSRSKSAIILLSATFLYSLIAEILVEHVDTVLDKFAISEKFLGLTLFALVPNTTEFMNAISFALNENIALSMEIGSAYALQVCLLQIPCLMGYSLFQYYRSGDSISFKHLFTMVFPTWDMICVMICVFLLTYVHSEGKSNYFKGSILVLAYLVSMLGFTFFNY.

Polar residues predominate over residues 1–19 (MSQPADINQSESSAETITQ). Disordered regions lie at residues 1 to 39 (MSQPADINQSESSAETITQGRRADRPEETPSSSVYEQNL) and 52 to 142 (ADAT…LRSE). Positions 63 to 77 (NDRDIYSPREIDQYT) are enriched in basic and acidic residues. Positions 83–95 (RTDPSTSTISNAR) are enriched in polar residues. A compositionally biased stretch (low complexity) spans 99 to 113 (RNSVSRLSRSSSNVR). Phosphoserine is present on Ser129. A run of 8 helical transmembrane segments spans residues 200 to 220 (IWLICFGAPLFLVIFICYIFF), 329 to 349 (LIIAPTLLITSAICMFTIFFV), 407 to 427 (IYIIYFDMLALIIPTIFFGFF), 438 to 458 (VFLFTASLVSIIPLAYFIGMA), 471 to 491 (GAFINAFFGSVIEVFLYSVAL), 504 to 524 (IGSILAGLLLMPGLSMCAGAI), 537 to 557 (GATSTMLLFAVLGAFAPTMLF), and 594 to 614 (LPFTYCCSIMLVLAYAIGLWF). Residues 641-717 (VGEPVNQDTA…SQNSHGDDAP (77 aa)) form a disordered region. Residues 646 to 657 (NQDTAGNMSDSS) show a composition bias toward polar residues. Residues 678-688 (SSGLSSNGSEN) are compositionally biased toward low complexity. Helical transmembrane passes span 726-746 (IILLSATFLYSLIAEILVEHV), 762-782 (LTLFALVPNTTEFMNAISFAL), 794-814 (SAYALQVCLLQIPCLMGYSLF), 828-848 (LFTMVFPTWDMICVMICVFLL), and 859-879 (YFKGSILVLAYLVSMLGFTFF).

The protein belongs to the Ca(2+):cation antiporter (CaCA) (TC 2.A.19) family.

The protein localises to the endoplasmic reticulum membrane. Putative cation exchanger. In Schizosaccharomyces pombe (strain 972 / ATCC 24843) (Fission yeast), this protein is Putative cation exchanger C521.04c.